Reading from the N-terminus, the 300-residue chain is Ribonuclease HIII (300 aa).

In terms of domain architecture, RNase H type-2 spans 86–300; the sequence is RPRLGVDESG…FNEICDSASA (215 aa). A divalent metal cation-binding residues include D92, E93, and D196.

It belongs to the RNase HII family. RnhC subfamily. The cofactor is Mn(2+). Mg(2+) is required as a cofactor.

The protein resides in the cytoplasm. It catalyses the reaction Endonucleolytic cleavage to 5'-phosphomonoester.. Functionally, endonuclease that specifically degrades the RNA of RNA-DNA hybrids. The sequence is that of Ribonuclease HIII from Chlamydia caviae (strain ATCC VR-813 / DSM 19441 / 03DC25 / GPIC) (Chlamydophila caviae).